The following is a 201-amino-acid chain: Anthranilate synthase component 2 (201 aa).

A Glutamine amidotransferase type-1 domain is found at 1-199 (MLLMIDNYDS…LRQQGGVRGE (199 aa)). Residue 52 to 54 (GPC) coordinates L-glutamine. Cys-79 (nucleophile; for GATase activity) is an active-site residue. L-glutamine is bound by residues Gln-83 and 129-130 (SL). Residues His-173 and Glu-175 each act as for GATase activity in the active site.

In terms of assembly, heterotetramer consisting of two non-identical subunits: a beta subunit (TrpG) and a large alpha subunit (TrpE).

The catalysed reaction is chorismate + L-glutamine = anthranilate + pyruvate + L-glutamate + H(+). The protein operates within amino-acid biosynthesis; L-tryptophan biosynthesis; L-tryptophan from chorismate: step 1/5. Part of a heterotetrameric complex that catalyzes the two-step biosynthesis of anthranilate, an intermediate in the biosynthesis of L-tryptophan. In the first step, the glutamine-binding beta subunit (TrpG) of anthranilate synthase (AS) provides the glutamine amidotransferase activity which generates ammonia as a substrate that, along with chorismate, is used in the second step, catalyzed by the large alpha subunit of AS (TrpE) to produce anthranilate. In the absence of TrpG, TrpE can synthesize anthranilate directly from chorismate and high concentrations of ammonia. This Pseudomonas aeruginosa (strain ATCC 15692 / DSM 22644 / CIP 104116 / JCM 14847 / LMG 12228 / 1C / PRS 101 / PAO1) protein is Anthranilate synthase component 2.